A 1305-amino-acid chain; its full sequence is Junctional cadherin 5-associated protein (1305 aa).

Disordered regions lie at residues 13 to 86 (YKLS…PSTA), 120 to 151 (REQE…VGGR), 249 to 419 (GVPK…HTTA), 450 to 545 (KLDG…CEMQ), 575 to 604 (IPVK…EQSV), 616 to 795 (ALTG…SRQL), and 818 to 1005 (FNKE…GLSA). 4 stretches are compositionally biased toward basic and acidic residues: residues 21-31 (APHEDDGERRQ), 69-82 (PESR…HGER), 120-129 (REQEAREDPG), and 140-151 (HPREGPWEVGGR). Residues 337-358 (GLEPPVYVPPPSYKSPPQPAAH) show a composition bias toward pro residues. Basic and acidic residues predominate over residues 360–369 (CPEEAVSRHE). 2 stretches are compositionally biased toward polar residues: residues 530 to 545 (LVSS…CEMQ) and 579 to 594 (SESQ…NDLK). Low complexity predominate over residues 595–604 (QSASLQEQSV). The segment covering 669-683 (QQTQTSFAHEPQSLQ) has biased composition (polar residues). Residues 729–748 (SPKSQGSLSPSSNSAFSGSS) show a composition bias toward low complexity. Ser-841 is subject to Phosphoserine. Basic and acidic residues-rich tracts occupy residues 878–889 (SKSESWSEEGRP) and 945–958 (AKPE…EQRE). Phosphoserine is present on residues Ser-1004, Ser-1010, Ser-1152, and Ser-1239. 2 disordered regions span residues 1062 to 1166 (GAQR…DVET) and 1234 to 1305 (SRAA…VERV). Residues 1276-1288 (ADGHPAARRENGG) show a composition bias toward basic and acidic residues.

It is found in the cell junction. Its subcellular location is the adherens junction. The protein is Junctional cadherin 5-associated protein (JCAD) of Bos taurus (Bovine).